The sequence spans 288 residues: Bifunctional protein FolD (288 aa).

NADP(+) contacts are provided by residues 166–168 (GRS), S191, and V232.

It belongs to the tetrahydrofolate dehydrogenase/cyclohydrolase family. In terms of assembly, homodimer.

The enzyme catalyses (6R)-5,10-methylene-5,6,7,8-tetrahydrofolate + NADP(+) = (6R)-5,10-methenyltetrahydrofolate + NADPH. The catalysed reaction is (6R)-5,10-methenyltetrahydrofolate + H2O = (6R)-10-formyltetrahydrofolate + H(+). The protein operates within one-carbon metabolism; tetrahydrofolate interconversion. In terms of biological role, catalyzes the oxidation of 5,10-methylenetetrahydrofolate to 5,10-methenyltetrahydrofolate and then the hydrolysis of 5,10-methenyltetrahydrofolate to 10-formyltetrahydrofolate. The polypeptide is Bifunctional protein FolD (Roseiflexus sp. (strain RS-1)).